A 593-amino-acid polypeptide reads, in one-letter code: Pyruvate kinase isozyme A, chloroplastic (593 aa).

The segment at 57–94 (DEPQSSPVLVSENGSGGVLSSATQEYGRNAAPGTDSSS) is disordered. Arg144 contributes to the substrate binding site. Positions 146, 178, and 179 each coordinate K(+). 146–149 (NMCH) contacts ATP. Glu343 provides a ligand contact to Mg(2+). Positions 366, 367, and 399 each coordinate substrate. Asp367 is a binding site for Mg(2+).

Belongs to the pyruvate kinase family. It depends on Mg(2+) as a cofactor. Requires K(+) as cofactor. In terms of tissue distribution, highest levels in roots. Also found in stems, leaves and flowers.

The protein localises to the plastid. It localises to the chloroplast. It catalyses the reaction pyruvate + ATP = phosphoenolpyruvate + ADP + H(+). It functions in the pathway carbohydrate degradation; glycolysis; pyruvate from D-glyceraldehyde 3-phosphate: step 5/5. The chain is Pyruvate kinase isozyme A, chloroplastic from Nicotiana tabacum (Common tobacco).